The chain runs to 179 residues: Large ribosomal subunit protein uL10 (179 aa).

It belongs to the universal ribosomal protein uL10 family. As to quaternary structure, part of the ribosomal stalk of the 50S ribosomal subunit. The N-terminus interacts with L11 and the large rRNA to form the base of the stalk. The C-terminus forms an elongated spine to which L12 dimers bind in a sequential fashion forming a multimeric L10(L12)X complex.

Functionally, forms part of the ribosomal stalk, playing a central role in the interaction of the ribosome with GTP-bound translation factors. This chain is Large ribosomal subunit protein uL10, found in Thermotoga neapolitana (strain ATCC 49049 / DSM 4359 / NBRC 107923 / NS-E).